Here is a 412-residue protein sequence, read N- to C-terminus: Gamma-glutamyl phosphate reductase (412 aa).

This sequence belongs to the gamma-glutamyl phosphate reductase family.

It localises to the cytoplasm. The catalysed reaction is L-glutamate 5-semialdehyde + phosphate + NADP(+) = L-glutamyl 5-phosphate + NADPH + H(+). Its pathway is amino-acid biosynthesis; L-proline biosynthesis; L-glutamate 5-semialdehyde from L-glutamate: step 2/2. Its function is as follows. Catalyzes the NADPH-dependent reduction of L-glutamate 5-phosphate into L-glutamate 5-semialdehyde and phosphate. The product spontaneously undergoes cyclization to form 1-pyrroline-5-carboxylate. The protein is Gamma-glutamyl phosphate reductase of Bartonella henselae (strain ATCC 49882 / DSM 28221 / CCUG 30454 / Houston 1) (Rochalimaea henselae).